The sequence spans 346 residues: PPE family protein PPE17 (346 aa).

Residues 6-159 are PPE; that stretch reads FPPEFNSLNI…LYATMAAAAA (154 aa).

Belongs to the mycobacterial PPE family. In terms of assembly, interacts with LRR motifs 15-20 of host Toll-like receptor 2 (TLR2).

Its subcellular location is the secreted. The protein resides in the cell wall. It localises to the cell surface. In terms of biological role, induces pro-inflammatory responses. Induces host TLR1/2 heterodimerization, which causes an increased recruitment of IRAK1, MYD88, and protein kinase C epsilon (PRKCE) to the downstream TLR-signaling complex that translocates PRKCE into the nucleus in an IRAK1-dependent manner. PRKCE-mediated phosphorylation allowed the nuclear IRAK3 to be exported to the cytoplasm, leading to increased activation of ERK1/2, stabilization of MAPK phosphatase 1 (MKP1), and induction of TNF-alpha with concomitant down-regulation of MAP kinase p38. Its function is as follows. During M.tuberculosis and HIV-1 co-infection, can stimulate transcription from the long terminal repeat (LTR) of HIV-1 in monocyte/macrophage cells. Interaction with human TLR2 activates the NF-kappa-B transcription factor, which binds to the promoter region of the HIV-1 and induces HIV-1 gene expression. The polypeptide is PPE family protein PPE17 (PPE17) (Mycobacterium tuberculosis (strain ATCC 25618 / H37Rv)).